We begin with the raw amino-acid sequence, 89 residues long: Cytochrome b (89 aa).

Helical transmembrane passes span 38–58 and 82–89; these read FGPL…FLAM and WLLRYMHA. Residue H88 participates in heme b binding.

Belongs to the cytochrome b family. In terms of assembly, the main subunits of complex b-c1 are: cytochrome b, cytochrome c1 and the Rieske protein. The cofactor is heme b.

The protein localises to the mitochondrion inner membrane. In terms of biological role, component of the ubiquinol-cytochrome c reductase complex (complex III or cytochrome b-c1 complex) that is part of the mitochondrial respiratory chain. The b-c1 complex mediates electron transfer from ubiquinol to cytochrome c. Contributes to the generation of a proton gradient across the mitochondrial membrane that is then used for ATP synthesis. The polypeptide is Cytochrome b (MT-CYB) (Brassica napus (Rape)).